We begin with the raw amino-acid sequence, 109 residues long: ATP-dependent Clp protease adapter protein ClpS (109 aa).

The disordered stretch occupies residues 1–23 (MTERKHDDTGVEEGTGLATKTRP).

It belongs to the ClpS family. Binds to the N-terminal domain of the chaperone ClpA.

Involved in the modulation of the specificity of the ClpAP-mediated ATP-dependent protein degradation. This Maricaulis maris (strain MCS10) (Caulobacter maris) protein is ATP-dependent Clp protease adapter protein ClpS.